The primary structure comprises 558 residues: Asparagine--tRNA ligase, cytoplasmic (558 aa).

At Ser-71 the chain carries Phosphoserine. The tract at residues 79 to 101 (MWHREQMKSESREKKEAEDSLRR) is disordered. A compositionally biased stretch (basic and acidic residues) spans 81 to 101 (HREQMKSESREKKEAEDSLRR). An N6-acetyllysine mark is found at Lys-254 and Lys-500.

It belongs to the class-II aminoacyl-tRNA synthetase family. In terms of assembly, homodimer.

The protein resides in the cytoplasm. It catalyses the reaction tRNA(Asn) + L-asparagine + ATP = L-asparaginyl-tRNA(Asn) + AMP + diphosphate + H(+). Catalyzes the attachment of asparagine to tRNA(Asn) in a two-step reaction: asparagine is first activated by ATP to form Asn-AMP and then transferred to the acceptor end of tRNA(Asn). In addition to its essential role in protein synthesis, acts as a signaling molecule that induced migration of CCR3-expressing cells. Has an essential role in the development of the cerebral cortex, being required for proper proliferation of radial glial cells. The chain is Asparagine--tRNA ligase, cytoplasmic from Macaca fascicularis (Crab-eating macaque).